We begin with the raw amino-acid sequence, 152 residues long: Ribosome maturation factor RimP (152 aa).

This sequence belongs to the RimP family.

The protein resides in the cytoplasm. In terms of biological role, required for maturation of 30S ribosomal subunits. In Escherichia coli (strain K12 / MC4100 / BW2952), this protein is Ribosome maturation factor RimP.